The primary structure comprises 309 residues: tRNA hydroxylation protein P2 (309 aa).

It belongs to the peptidase U32 family.

Functionally, involved in prephenate-dependent formation of 5-hydroxyuridine (ho5U) modification at position 34 in tRNAs, the first step in 5-methoxyuridine (mo5U) biosynthesis. This is tRNA hydroxylation protein P2 from Bacillus subtilis (strain 168).